A 137-amino-acid polypeptide reads, in one-letter code: Putative transcriptional regulatory protein MJ0173 (137 aa).

The protein belongs to the Tfx family.

Its function is as follows. Putative transcriptional regulator. The sequence is that of Putative transcriptional regulatory protein MJ0173 from Methanocaldococcus jannaschii (strain ATCC 43067 / DSM 2661 / JAL-1 / JCM 10045 / NBRC 100440) (Methanococcus jannaschii).